A 199-amino-acid polypeptide reads, in one-letter code: Interleukin-11 (199 aa).

Residues Met1 to Ala21 form the signal peptide. Residues His182–Arg190 are important for interaction with IL11RA and for the stimulation of cell proliferation.

This sequence belongs to the IL-6 superfamily. As to quaternary structure, interacts with IL11RA to associate with IL6ST, giving rise to a multimeric signaling complex.

The protein localises to the secreted. Its function is as follows. Cytokine that stimulates the proliferation of hematopoietic stem cells and megakaryocyte progenitor cells and induces megakaryocyte maturation resulting in increased platelet production. Also promotes the proliferation of hepatocytes in response to liver damage. Binding to its receptor formed by IL6ST and IL11RA activates a signaling cascade that promotes cell proliferation. Signaling leads to the activation of intracellular protein kinases and the phosphorylation of STAT3. The interaction with the membrane-bound IL11RA and IL6ST stimulates 'classic signaling', whereas the binding of IL11 and soluble IL11RA to IL6ST stimulates 'trans-signaling'. The protein is Interleukin-11 (IL11) of Macaca fascicularis (Crab-eating macaque).